Consider the following 143-residue polypeptide: Putative aryl-alcohol dehydrogenase AAD15 (143 aa).

It belongs to the aldo/keto reductase family. Aldo/keto reductase 2 subfamily.

Functionally, putative aryl-alcohol dehydrogenase. This chain is Putative aryl-alcohol dehydrogenase AAD15 (AAD15), found in Saccharomyces cerevisiae (strain ATCC 204508 / S288c) (Baker's yeast).